The chain runs to 159 residues: Transcription elongation factor GreA (159 aa).

Residues 43–75 (LSENAEYDAAREEQSQLEAKIGEIENKLASATI) are a coiled coil.

Belongs to the GreA/GreB family.

In terms of biological role, necessary for efficient RNA polymerase transcription elongation past template-encoded arresting sites. The arresting sites in DNA have the property of trapping a certain fraction of elongating RNA polymerases that pass through, resulting in locked ternary complexes. Cleavage of the nascent transcript by cleavage factors such as GreA or GreB allows the resumption of elongation from the new 3'terminus. GreA releases sequences of 2 to 3 nucleotides. The chain is Transcription elongation factor GreA from Chlorobaculum tepidum (strain ATCC 49652 / DSM 12025 / NBRC 103806 / TLS) (Chlorobium tepidum).